A 376-amino-acid chain; its full sequence is Glycerol-3-phosphate acyltransferase 9 (376 aa).

Residues 1–78 (MSSTAGRLVT…SNPPEPWNWN (78 aa)) are Cytoplasmic-facing. A Phosphoserine modification is found at Ser-13. Transmembrane regions (helical) follow at residues 79–99 (IYLF…LFPL), 102–122 (FTLA…NALL), and 135–155 (VLVE…VKYH). Residues 156-376 (GPRPSIRPKQ…ESILARLEEK (221 aa)) are Cytoplasmic-facing. Residues 168 to 180 (VANHTSMIDFIVL) form a catalytic region. The HXXXXD motif motif lies at 171–176 (HTSMID). Residue 209–218 (GCIWFNRSEA) coordinates sn-glycerol 3-phosphate. Positions 242–262 (IFPEGTCVNNNYTVMFKKGAF) are glycerol-3-phosphate binding. Residues 266–275 (CTVCPIAIKY) are catalytic. The tract at residues 369–373 (ILARL) is endoplasmic reticulum targeting.

Belongs to the 1-acyl-sn-glycerol-3-phosphate acyltransferase family. In terms of assembly, self-interacts. Interacts with LPAT2 and LPCAT2. Up-regulated during embryogenesis. Expressed in seedlings, leaves, stems, roots, floral buds, flowers, pollen, and siliques at various developmental stages.

It is found in the endoplasmic reticulum membrane. It catalyses the reaction sn-glycerol 3-phosphate + an acyl-CoA = a 1-acyl-sn-glycero-3-phosphate + CoA. Its pathway is glycerolipid metabolism; triacylglycerol biosynthesis. Its function is as follows. Essential protein. Required for male and female gametophytes development. Exhibits sn-1 acyltransferase activity with high specificity for acyl-coenzyme A, thus triggering storage lipid biosynthesis and playing an important role in the Kennedy pathway of glycerolipid biosynthesis. Catalyzes triacylglycerol (TAG) accumulation involved in membrane lipid and oil biosynthesis, especially in seeds. Also contributes to the biosynthesis of both polar lipids and TAG in developing leaves, as well as lipid droplet production in developing pollen grains. Seems to not contribute to surface lipid biosynthesis (e.g. waxes and cutin). The sequence is that of Glycerol-3-phosphate acyltransferase 9 from Arabidopsis thaliana (Mouse-ear cress).